The following is an 884-amino-acid chain: MSKELSPKYNPAEVEEGRYQTWLDQDVFKPSGDTEAKPYSIVIPPPNVTGKLHLGHAWDTTLQDIIIRQKRMQGFDTLWLPGMDHAGIATQAKVEERLREQGISRYDLGREKFLDKVWEWKDEYAATIKSQWGKMGLSVDYSRERFTLDEGLSKAVRKVFVDLYNKGWIYRGEFIINWDPAARTALSDIEVIHKDVEGAFYHMNYMLEDGSRALEVATTRPETMFGDVAVAVNPEDPRYKDLIGQNVILPIINKPIPIIADEHADPEFGTGVVKITPAHDPNDFAVGQRHNLPQVNVMNDDGTMNELADEFNGMDRFEARKAVVAKLESLGNLVKIEKMTHSVGHSERTGVVVEPRLSTQWFVKMDQLAKNAIANQDTEDKVEFYPPRFNDTFMSWMENVHDWVISRQLWWGHQIPAWYNVNGEMYVGEDAPEGDGWTQDEDVLDTWFSSALWPFSTMGWPDTEAADFKRYFPTSTLVTGYDIIFFWVSRMIFQSLEFTGRQPFSNVLIHGLIRDEEGRKMSKSLGNGIDPMDVIEKYGADALRWFLSNGSAPGQDVRFSYEKMDASWNFINKIWNISRYILMNNEGLTLDQARENVEKVVNSQVGNVTDRWILHNLNETVGKVTESFDKFEFGVAGHILYNFIWEEFANWYVELTKEVLYSDNEDEKVVTRSVLLYTLDQILRLLHPIMPFVTEEIFGQYAEGSIVLASYPQVNATFENQTAHKGVESLKDLIRSVRNSRAEVNVAPSKPITILVKTSDSELESFFKDNSNYIKRFTNPETLEISSAITAPELAMTSIITGAEIFLPLADLLNVEEELARLEKELAKWQKELNMVGKKLSNERFVANAKPEVVQKEKDKQTDYQTKYDATIARIEEMKKLNND.

Residues 46–56 (PNVTGKLHLGH) carry the 'HIGH' region motif. Positions 520–524 (KMSKS) match the 'KMSKS' region motif. K523 contributes to the ATP binding site. Residues 809–844 (LADLLNVEEELARLEKELAKWQKELNMVGKKLSNER) are a coiled coil.

The protein belongs to the class-I aminoacyl-tRNA synthetase family. ValS type 1 subfamily. In terms of assembly, monomer.

It localises to the cytoplasm. It carries out the reaction tRNA(Val) + L-valine + ATP = L-valyl-tRNA(Val) + AMP + diphosphate. In terms of biological role, catalyzes the attachment of valine to tRNA(Val). As ValRS can inadvertently accommodate and process structurally similar amino acids such as threonine, to avoid such errors, it has a 'posttransfer' editing activity that hydrolyzes mischarged Thr-tRNA(Val) in a tRNA-dependent manner. This is Valine--tRNA ligase from Streptococcus agalactiae serotype III (strain NEM316).